A 268-amino-acid polypeptide reads, in one-letter code: Ribonuclease P protein subunit p30 (268 aa).

Residue alanine 2 is modified to N-acetylalanine. The interval 247 to 268 (KPRPSEGDEDCLPASKKAKCEG) is disordered. Serine 251 is subject to Phosphoserine.

The protein belongs to the eukaryotic/archaeal RNase P protein component 3 family. In terms of assembly, component of nuclear RNase P and RNase MRP ribonucleoproteins. RNase P consists of a catalytic RNA moiety and about 10 protein subunits; POP1, POP4, POP5, POP7, RPP14, RPP21, RPP25, RPP30, RPP38 and RPP40. Within the RNase P complex, POP1, POP7 and RPP25 form the 'finger' subcomplex, POP5, RPP14, RPP40 and homodimeric RPP30 form the 'palm' subcomplex, and RPP21, POP4 and RPP38 form the 'wrist' subcomplex. All subunits of the RNase P complex interact with the catalytic RNA. Several subunits of RNase P are also part of the RNase MRP complex. RNase MRP consists of a catalytic RNA moiety and about 8 protein subunits; POP1, POP7, RPP25, RPP30, RPP38, RPP40 and possibly also POP4 and POP5.

It localises to the nucleus. Its subcellular location is the nucleolus. Functionally, component of ribonuclease P, a ribonucleoprotein complex that generates mature tRNA molecules by cleaving their 5'-ends. Also a component of the MRP ribonuclease complex, which cleaves pre-rRNA sequences. The polypeptide is Ribonuclease P protein subunit p30 (RPP30) (Homo sapiens (Human)).